Consider the following 654-residue polypeptide: tRNA uridine 5-carboxymethylaminomethyl modification enzyme MnmG (654 aa).

Position 17-22 (17-22) interacts with FAD; that stretch reads GGGHAG. Residue 289–303 coordinates NAD(+); it reads GPRYCPSIEDKIVKF.

It belongs to the MnmG family. As to quaternary structure, homodimer. Heterotetramer of two MnmE and two MnmG subunits. Requires FAD as cofactor.

Its subcellular location is the cytoplasm. In terms of biological role, NAD-binding protein involved in the addition of a carboxymethylaminomethyl (cmnm) group at the wobble position (U34) of certain tRNAs, forming tRNA-cmnm(5)s(2)U34. The polypeptide is tRNA uridine 5-carboxymethylaminomethyl modification enzyme MnmG (Prochlorococcus marinus (strain MIT 9515)).